The chain runs to 936 residues: Lipoxygenase 2.1, chloroplastic (936 aa).

The interval 1-69 is disordered; that stretch reads MLTATKPLVG…LSADSNGAAV (69 aa). Positions 47 to 59 are enriched in low complexity; the sequence is STSTSTTTTTTTT. The region spanning 88 to 217 is the PLAT domain; it reads MKATVTVHMS…CTPDKRVFFP (130 aa). A Lipoxygenase domain is found at 220 to 936; that stretch reads SYLPSQTPKG…EMGIPNSISI (717 aa). Residues 264–308 form a disordered region; the sequence is LGNPDDDNNPTTRPVLGGKEHPYPRRCRTGRPRSKKDPFSEERSH. Basic residues predominate over residues 287–297; sequence PRRCRTGRPRS. A compositionally biased stretch (basic and acidic residues) spans 298 to 308; that stretch reads KKDPFSEERSH. Fe cation-binding residues include His587, His592, His777, Asn781, and Ile936.

Belongs to the lipoxygenase family. Fe cation is required as a cofactor. The N-terminus is blocked.

It is found in the plastid. It localises to the chloroplast. The enzyme catalyses (9Z,12Z)-octadecadienoate + O2 = (13S)-hydroperoxy-(9Z,11E)-octadecadienoate. The catalysed reaction is (9Z,12Z,15Z)-octadecatrienoate + O2 = (13S)-hydroperoxy-(9Z,11E,15Z)-octadecatrienoate. The protein operates within lipid metabolism; oxylipin biosynthesis. Functionally, plant lipoxygenase may be involved in a number of diverse aspects of plant physiology including growth and development, pest resistance, and senescence or responses to wounding. This enzyme is possibly involved in jasmonic acid synthesis. It exhibits linoleate 13-lipoxygenase and arachidonate 15-lipoxygenase activity. The sequence is that of Lipoxygenase 2.1, chloroplastic (LOX2.1) from Hordeum vulgare (Barley).